The following is a 256-amino-acid chain: Small ribosomal subunit protein eS1 (256 aa).

Position 2 is an N-acetylalanine; partial (A2).

The protein belongs to the eukaryotic ribosomal protein eS1 family. Component of the small ribosomal subunit. Mature ribosomes consist of a small (40S) and a large (60S) subunit. The 40S subunit contains about 33 different proteins and 1 molecule of RNA (18S). The 60S subunit contains about 49 different proteins and 3 molecules of RNA (25S, 5.8S and 5S).

Its subcellular location is the cytoplasm. The chain is Small ribosomal subunit protein eS1 from Meyerozyma guilliermondii (strain ATCC 6260 / CBS 566 / DSM 6381 / JCM 1539 / NBRC 10279 / NRRL Y-324) (Yeast).